A 178-amino-acid polypeptide reads, in one-letter code: FANCD2 opposite strand protein (178 aa).

The sequence is that of FANCD2 opposite strand protein (Fancd2os) from Mus musculus (Mouse).